Reading from the N-terminus, the 302-residue chain is L-threonate dehydrogenase (302 aa).

NAD(+) contacts are provided by residues 7-35 and T102; that span reads FHVGIVGLGSMGMGAALSCVRAGLSTWGA. K178 is an active-site residue. K246 is an NAD(+) binding site.

It belongs to the HIBADH-related family. L-threonate dehydrogenase subfamily.

It catalyses the reaction L-threonate + NAD(+) = 2-dehydro-L-erythronate + NADH + H(+). In terms of biological role, catalyzes oxidation of L-threonate to 2-oxo-tetronate. Can use either NAD(+) or NADP(+) as cosubstrate, with a preference for NAD(+). This is L-threonate dehydrogenase from Escherichia coli O6:H1 (strain CFT073 / ATCC 700928 / UPEC).